We begin with the raw amino-acid sequence, 120 residues long: Large ribosomal subunit protein bL20 (120 aa).

The protein belongs to the bacterial ribosomal protein bL20 family.

Its function is as follows. Binds directly to 23S ribosomal RNA and is necessary for the in vitro assembly process of the 50S ribosomal subunit. It is not involved in the protein synthesizing functions of that subunit. This Ligilactobacillus salivarius (strain UCC118) (Lactobacillus salivarius) protein is Large ribosomal subunit protein bL20.